The sequence spans 362 residues: Protein RecA (362 aa).

77-84 (GPESSGKT) is an ATP binding site.

It belongs to the RecA family.

It is found in the cytoplasm. In terms of biological role, can catalyze the hydrolysis of ATP in the presence of single-stranded DNA, the ATP-dependent uptake of single-stranded DNA by duplex DNA, and the ATP-dependent hybridization of homologous single-stranded DNAs. It interacts with LexA causing its activation and leading to its autocatalytic cleavage. The chain is Protein RecA from Allorhizobium ampelinum (strain ATCC BAA-846 / DSM 112012 / S4) (Agrobacterium vitis (strain S4)).